Consider the following 194-residue polypeptide: Imidazoleglycerol-phosphate dehydratase (194 aa).

This sequence belongs to the imidazoleglycerol-phosphate dehydratase family.

The protein resides in the cytoplasm. The enzyme catalyses D-erythro-1-(imidazol-4-yl)glycerol 3-phosphate = 3-(imidazol-4-yl)-2-oxopropyl phosphate + H2O. It participates in amino-acid biosynthesis; L-histidine biosynthesis; L-histidine from 5-phospho-alpha-D-ribose 1-diphosphate: step 6/9. The chain is Imidazoleglycerol-phosphate dehydratase from Ruminiclostridium cellulolyticum (strain ATCC 35319 / DSM 5812 / JCM 6584 / H10) (Clostridium cellulolyticum).